The following is a 466-amino-acid chain: Heat stress transcription factor A-5 (466 aa).

Residues 21 to 115 mediate DNA binding; the sequence is PAPFLVKTYE…LLKNIHRRKP (95 aa). A hydrophobic repeat HR-A/B region spans residues 125–191; sequence SSTDQERAVL…KLLNFLETAI (67 aa). The Bipartite nuclear localization signal signature appears at 198–217; that stretch reads KNFGKKVEQLDISAYNKKRR. Disordered stretches follow at residues 215–248, 272–300, and 422–466; these read KRRL…GNIF, HSIQ…LTKR, and TERP…QLTL. Basic and acidic residues predominate over residues 218–233; that stretch reads LPEVEQSKPPSEDSHL. Positions 414–423 match the AHA motif; that stretch reads DVFWEQFLTE. Polar residues-rich tracts occupy residues 425-438 and 455-466; these read PGSS…STYR and LRNTKNIEQLTL. A Nuclear export signal motif is present at residues 461–466; the sequence is IEQLTL.

It belongs to the HSF family. Class A subfamily. As to quaternary structure, homotrimer. In terms of processing, exhibits temperature-dependent phosphorylation.

The protein localises to the cytoplasm. Its subcellular location is the nucleus. Its function is as follows. Transcriptional activator that specifically binds DNA sequence 5'-AGAAnnTTCT-3' known as heat shock promoter elements (HSE). This is Heat stress transcription factor A-5 (HSFA5) from Arabidopsis thaliana (Mouse-ear cress).